The following is a 58-amino-acid chain: Small ribosomal subunit protein bS21C (58 aa).

The disordered stretch occupies residues 38–58 (YEKPSLRRKRKAEAARKGGRY). Residues 49–58 (AEAARKGGRY) show a composition bias toward basic and acidic residues.

The protein belongs to the bacterial ribosomal protein bS21 family.

This is Small ribosomal subunit protein bS21C (rpsU3) from Nostoc sp. (strain PCC 7120 / SAG 25.82 / UTEX 2576).